We begin with the raw amino-acid sequence, 721 residues long: MQGQTQSISFDGREIRLTTGRYAPQAGGSVMMECGDTSVLVTATRSTGREGIDFLPLICDYEERLYAAGRIPGSFMRREGRPPERATLIARLIDRPMRPLFPSWMRDDLQIVATCLSLDERVPADVLAVTGASMATLLAGIPFQGPMAAVRVGLLGDDFVLNPSYREIERGDLDLVVAGTPDGVVMVEAGANQLPEGDVIEAIDFGYEAVCELIKAQQSILKDAGIKQVQPEPPTQDTKLSTYLEKNCSKSIGEVLKQFEQTKAERDSKLDAIKAKTAEAIDSLKEDDAVRKSVNANSKVLSNNFKALTKKLMREQIIKQGKRVDGRKLDEVRTITSAAGVLPKRVHGSGLFQRGLTQVLSTATLGTPSDAQEMDDLNPGPEKTYLHHYNFPPYSVGETRPMRSPGRREVGHGSLAERAIIPVLPPKDTFPYVLRVVSEVLSSNGSTSMGSVCGSTLALMDAGVPLKAPVSGAAMGLIKEDAEIRILTDIQGIEDFLGDMDFKVAGTKDGITALQMDMKITGLPVKTIAEAVNQARPARIHILEKMLEAIDAPRTSLSPHAPRLLSFRIDPELIGTVIGPGGRTIKGITERTNTKIDIEDGGIVTIASHDGAAAEAAQRIIEGLTRKVNEGEVFSGTITRIIPIGAFVEILPGKEGMIHISQLSEARVEKVDDVVKVGDEVTVRIREIDNRGRINLTLRGVPQNGEETQSEPAPTPVAPLN.

Positions 495 and 501 each coordinate Mg(2+). One can recognise a KH domain in the interval 562-621 (PRLLSFRIDPELIGTVIGPGGRTIKGITERTNTKIDIEDGGIVTIASHDGAAAEAAQRII). The region spanning 631 to 699 (GEVFSGTITR…NRGRINLTLR (69 aa)) is the S1 motif domain. Residues 700–721 (GVPQNGEETQSEPAPTPVAPLN) form a disordered region.

The protein belongs to the polyribonucleotide nucleotidyltransferase family. Mg(2+) is required as a cofactor.

The protein localises to the cytoplasm. It catalyses the reaction RNA(n+1) + phosphate = RNA(n) + a ribonucleoside 5'-diphosphate. Involved in mRNA degradation. Catalyzes the phosphorolysis of single-stranded polyribonucleotides processively in the 3'- to 5'-direction. The protein is Polyribonucleotide nucleotidyltransferase of Prochlorococcus marinus (strain MIT 9303).